Consider the following 84-residue polypeptide: Small ribosomal subunit protein eS27w (84 aa).

A C4-type zinc finger spans residues 39–61 (CQGCFNITTVFSHSQTVVVCGNC).

The protein belongs to the eukaryotic ribosomal protein eS27 family. Requires Zn(2+) as cofactor.

The polypeptide is Small ribosomal subunit protein eS27w (RPS27D) (Arabidopsis thaliana (Mouse-ear cress)).